The primary structure comprises 266 residues: 15-hydroxyprostaglandin dehydrogenase [NAD(+)] (266 aa).

Residues 12–20 (GAAQGIGRA), 36–37 (DW), 63–65 (CDV), and asparagine 91 each bind NAD(+). The substrate site is built by serine 138 and glutamine 148. Tyrosine 151 functions as the Proton acceptor in the catalytic mechanism. NAD(+)-binding positions include 151–155 (YCASK) and 186–188 (VDT).

Belongs to the short-chain dehydrogenases/reductases (SDR) family. As to quaternary structure, homodimer.

It is found in the cytoplasm. It catalyses the reaction prostaglandin E2 + NAD(+) = 15-oxoprostaglandin E2 + NADH + H(+). It carries out the reaction (15S)-hydroxy-(5Z,8Z,11Z,13E)-eicosatetraenoate + NAD(+) = 15-oxo-(5Z,8Z,11Z,13E)-eicosatetraenoate + NADH + H(+). The enzyme catalyses (11R)-hydroxy-(5Z,8Z,12E,14Z)-eicosatetraenoate + NAD(+) = 11-oxo-(5Z,8Z,12E,14Z)-eicosatetraenoate + NADH + H(+). The catalysed reaction is lipoxin A4 + NAD(+) = 15-oxo-(5S,6R)-dihydroxy-(7E,9E,11Z,13E)-eicosatetraenoate + NADH + H(+). It catalyses the reaction 15-oxo-(5S,6R)-dihydroxy-(7E,9E,11Z)-eicosatrienoate + NADH + H(+) = (5S,6R,15S)-trihydroxy-(7E,9E,11Z)-eicosatrienoate + NAD(+). It carries out the reaction prostaglandin A1 + NAD(+) = 15-oxo-prostaglandin A1 + NADH + H(+). The enzyme catalyses prostaglandin E1 + NAD(+) = 15-oxoprostaglandin E1 + NADH + H(+). The catalysed reaction is 14-hydroxy-(4Z,7Z,10Z,12E,16Z,19Z)-docosahexaenoate + NAD(+) = 14-oxo-(4Z,7Z,10Z,12E,16Z,19Z)-docosahexaenoate + NADH + H(+). It catalyses the reaction resolvin E1 + NAD(+) = 18-oxo-resolvin E1 + NADH + H(+). It carries out the reaction resolvin D1 + NAD(+) = 8-oxoresolvin D1 + NADH + H(+). The enzyme catalyses resolvin D1 + NAD(+) = 17-oxoresolvin D1 + NADH + H(+). The catalysed reaction is resolvin D2 + NAD(+) = 7-oxoresolvin D2 + NADH + H(+). It catalyses the reaction resolvin D2 + NAD(+) = 16-oxoresolvin D2 + NADH + H(+). Functionally, catalyzes the NAD-dependent dehydrogenation (oxidation) of a broad array of hydroxylated polyunsaturated fatty acids (mainly eicosanoids and docosanoids, including prostaglandins, lipoxins and resolvins), yielding their corresponding keto (oxo) metabolites. Decreases the levels of the pro-proliferative prostaglandins such as prostaglandin E2 (whose activity is increased in cancer because of an increase in the expression of cyclooxygenase 2) and generates oxo-fatty acid products that can profoundly influence cell function by abrogating pro-inflammatory cytokine expression. Converts resolvins E1, D1 and D2 to their oxo products, which represents a mode of resolvin inactivation. Resolvin E1 plays important roles during the resolution phase of acute inflammation, while resolvins D1 and D2 have a unique role in obesity-induced adipose inflammation. The chain is 15-hydroxyprostaglandin dehydrogenase [NAD(+)] (HPGD) from Bos taurus (Bovine).